A 776-amino-acid chain; its full sequence is LPS-assembly protein LptD (776 aa).

Positions methionine 1 to alanine 24 are cleaved as a signal peptide.

The protein belongs to the LptD family. In terms of assembly, component of the lipopolysaccharide transport and assembly complex. Interacts with LptE and LptA.

The protein localises to the cell outer membrane. Its function is as follows. Together with LptE, is involved in the assembly of lipopolysaccharide (LPS) at the surface of the outer membrane. The sequence is that of LPS-assembly protein LptD from Vibrio vulnificus (strain YJ016).